Reading from the N-terminus, the 95-residue chain is Protein NCBP2AS2 homolog (95 aa).

The chain is Protein NCBP2AS2 homolog from Ixodes scapularis (Black-legged tick).